A 208-amino-acid polypeptide reads, in one-letter code: Heat shock protein 26 (208 aa).

Residues S44, S52, and S58 each carry the phosphoserine modification. Positions 71 to 179 constitute a sHSP domain; the sequence is ANRNDIHWPA…KSKERIIQIQ (109 aa). A disordered region spans residues 187–208; sequence NVKANESEVKGKENGAPNGKDK. Basic and acidic residues predominate over residues 191 to 208; sequence NESEVKGKENGAPNGKDK.

Belongs to the small heat shock protein (HSP20) family.

The polypeptide is Heat shock protein 26 (Hsp26) (Drosophila melanogaster (Fruit fly)).